The following is a 635-amino-acid chain: MVSIRLPDGSVRQYEHPVTVAEVAASIGPGLAKAALGGKLDGELVDTSAVIDHDASLAIVTDKDPDGLDIIRHSTAHLLAYAVKELYPDAQVTIGPVIDNGFYYDFAYHRPFTPEDLEKIEKRMQELAKKDEPVTRRVVSRDEAAGYFRSIGEKYKAEIIESIPESDEIKLYSHGGFTDLCRGPHVPSTGKLKVFKLMKVAGAYWRGDSKNEQLQRIYGTAWTKKEDQDQYLHMLEEAEKRDHRKLGKQLDLFHMQEESPGMVFWHPKGWALWQQVEQYMRRRVNEAGYLEIKTPMIMDRSLWEASGHWQNYRENMFTTESEKRDYAIKPMNCPGHVQVFKHGLRSYRDLPLRYAEFGSCHRNEASGALHGLMRVRGFVQDDAHIFCTEEQIIAESIAFNKLAMSVYRDFGFDHIDIKLSLRPEQRMGSDETWDRAEQGLREALTACGLQWEELPGEGAFYGPKIEYHIKDALGRSWQCGTLQLDMMLPERLGAEYVAEDNSRRRPVMLHRAIVGSMERFLGILIEHHAGAMPVWLAPVQAVVLNIAESQVEYAQSLAQTLQKQGLRVTADLRNEKISYKIREHTLEKVPYLLVVGDKERDAQTVAVRARGGVDLGVMPVEAFVERLQEDLRSFK.

The 61-residue stretch at 1-61 (MVSIRLPDGS…DHDASLAIVT (61 aa)) folds into the TGS domain. The catalytic stretch occupies residues 242 to 533 (DHRKLGKQLD…LIEHHAGAMP (292 aa)). Zn(2+) contacts are provided by C333, H384, and H510.

It belongs to the class-II aminoacyl-tRNA synthetase family. As to quaternary structure, homodimer. Requires Zn(2+) as cofactor.

The protein resides in the cytoplasm. It carries out the reaction tRNA(Thr) + L-threonine + ATP = L-threonyl-tRNA(Thr) + AMP + diphosphate + H(+). Catalyzes the attachment of threonine to tRNA(Thr) in a two-step reaction: L-threonine is first activated by ATP to form Thr-AMP and then transferred to the acceptor end of tRNA(Thr). Also edits incorrectly charged L-seryl-tRNA(Thr). The protein is Threonine--tRNA ligase of Burkholderia multivorans (strain ATCC 17616 / 249).